A 605-amino-acid polypeptide reads, in one-letter code: uncharacterized protein (605 aa).

2 disordered regions span residues 10 to 78 (RRGG…FPPA) and 216 to 248 (RAPDCPSPRTPMVKPPFRIPDAKPGLTPSVRNP). Residues 20-48 (AGGRPAAGGRPAAGGRPAAGSRAAAGAAG) show a composition bias toward low complexity. Over residues 220 to 233 (CPSPRTPMVKPPFR) the composition is skewed to pro residues.

This is an uncharacterized protein from Dryophytes versicolor (chameleon treefrog).